Here is a 202-residue protein sequence, read N- to C-terminus: MDLERIYRDAGAYLKGHFLLTSGNHSQFYLQSAKVLEYPQLAGRLADELARIIAAHGVEFDSVCSPALGGILAGYELARAAKKRFIFTERVDKVMTLRRGFEVKKGERFIVCEDIITTGGSALEAANIIKGLGGEVVGFAALANRGFCSLANLKNEAKSNCKLPSDVPLFALGNFEFEIYAPENCPLCASGSQAIKPGSRGN.

Residues K93 and 113 to 121 (EDIITTGGS) each bind 5-phospho-alpha-D-ribose 1-diphosphate. Orotate contacts are provided by T117 and R145.

This sequence belongs to the purine/pyrimidine phosphoribosyltransferase family. PyrE subfamily. In terms of assembly, homodimer. Requires Mg(2+) as cofactor.

It catalyses the reaction orotidine 5'-phosphate + diphosphate = orotate + 5-phospho-alpha-D-ribose 1-diphosphate. Its pathway is pyrimidine metabolism; UMP biosynthesis via de novo pathway; UMP from orotate: step 1/2. Catalyzes the transfer of a ribosyl phosphate group from 5-phosphoribose 1-diphosphate to orotate, leading to the formation of orotidine monophosphate (OMP). This is Orotate phosphoribosyltransferase from Campylobacter curvus (strain 525.92).